The sequence spans 540 residues: Chaperonin GroEL (540 aa).

Residues 29–32, 86–90, Gly-413, 476–478, and Asp-492 contribute to the ATP site; these read TIGP, DGTTT, and NAA.

Belongs to the chaperonin (HSP60) family. Forms a cylinder of 14 subunits composed of two heptameric rings stacked back-to-back. Interacts with the co-chaperonin GroES.

It localises to the cytoplasm. It carries out the reaction ATP + H2O + a folded polypeptide = ADP + phosphate + an unfolded polypeptide.. In terms of biological role, together with its co-chaperonin GroES, plays an essential role in assisting protein folding. The GroEL-GroES system forms a nano-cage that allows encapsulation of the non-native substrate proteins and provides a physical environment optimized to promote and accelerate protein folding. This is Chaperonin GroEL from Staphylococcus saprophyticus subsp. saprophyticus (strain ATCC 15305 / DSM 20229 / NCIMB 8711 / NCTC 7292 / S-41).